We begin with the raw amino-acid sequence, 351 residues long: Nicotinate-nucleotide--dimethylbenzimidazole phosphoribosyltransferase (351 aa).

Glutamate 315 serves as the catalytic Proton acceptor.

The protein belongs to the CobT family.

It catalyses the reaction 5,6-dimethylbenzimidazole + nicotinate beta-D-ribonucleotide = alpha-ribazole 5'-phosphate + nicotinate + H(+). Its pathway is nucleoside biosynthesis; alpha-ribazole biosynthesis; alpha-ribazole from 5,6-dimethylbenzimidazole: step 1/2. Catalyzes the synthesis of alpha-ribazole-5'-phosphate from nicotinate mononucleotide (NAMN) and 5,6-dimethylbenzimidazole (DMB). The polypeptide is Nicotinate-nucleotide--dimethylbenzimidazole phosphoribosyltransferase (Acetivibrio thermocellus (strain ATCC 27405 / DSM 1237 / JCM 9322 / NBRC 103400 / NCIMB 10682 / NRRL B-4536 / VPI 7372) (Clostridium thermocellum)).